The sequence spans 319 residues: Olfactory receptor 5B21 (319 aa).

Topologically, residues 1-26 are extracellular; the sequence is MTSMENITEVTEFILLGLTDDPNLQV. An N-linked (GlcNAc...) asparagine glycan is attached at N6. The helical transmembrane segment at 27 to 47 threads the bilayer; it reads PLLLIFLFIYLVTLIGNGGMM. Over 48–55 the chain is Cytoplasmic; sequence VIIFSDSH. Residues 56–76 traverse the membrane as a helical segment; that stretch reads LHTPMYFFLSNLSFVDLGYSS. At 77–100 the chain is on the extracellular side; sequence AVAPKMVAALQSGNKVISYNGCAA. C98 and C190 are oxidised to a cystine. The helical transmembrane segment at 101 to 121 threads the bilayer; it reads QFFFFVGFATVECYLLASMAY. Topologically, residues 122–134 are cytoplasmic; it reads DRHAAVCRPLHYT. The chain crosses the membrane as a helical span at residues 135-155; the sequence is TTMTTGVCTILTIGSYTCGFL. Over 156–197 the chain is Extracellular; that stretch reads NASIHAADTFKLSFCGSNKINHFFCDIPPLLALACSSTHISK. Residues 198–218 traverse the membrane as a helical segment; it reads LVVFFVVGFNVFFTLLVIIIS. At 219–238 the chain is on the cytoplasmic side; that stretch reads YFFIYIAIQNMKSSEGRKKA. The helical transmembrane segment at 239–259 threads the bilayer; sequence FSTCASHLTAVSIFYGTIIFM. The Extracellular segment spans residues 260-272; sequence YLQPSSGQSMDTD. Residues 273–293 traverse the membrane as a helical segment; that stretch reads KIASVFYTVVIPMLNPLIYSL. The Cytoplasmic portion of the chain corresponds to 294 to 319; that stretch reads RNREVKSALWKILNRFYPASFSVSRK.

Belongs to the G-protein coupled receptor 1 family.

It localises to the cell membrane. Functionally, odorant receptor. The chain is Olfactory receptor 5B21 from Mus musculus (Mouse).